We begin with the raw amino-acid sequence, 251 residues long: 3-isopropylmalate dehydratase small subunit 1 (251 aa).

The N-terminal 59 residues, 1–59 (MAASLQSANPTLSRTLASPNKPSSFATFRSPFLRFNSTSVASNFKPLVSREASSSFVTR), are a transit peptide targeting the chloroplast.

Belongs to the LeuD family. Heterodimer of the large LEUC/IIL1 subunit and the small LEUD (SSU1, SSU2 or SSU3) subunits. In terms of tissue distribution, expressed at low levels in roots, root tips, at the basis of the hypocotyls, and in emerging leaves. In young seedlings, expressed in cotyledon epidermal cells. In hypocotyls, expressed in peripheral cells. In seedling roots, expressed in the epidermis, including root hairs, and throughout the cortex. In rosette leaves, expressed in the upper and lower epidermis. In roots of adult plants, expressed in the root tips and cortex of the mature root enclosing the stele. In flowering stalks, expressed in the epidermis. Expressed in the carpel epidermis.

The protein localises to the plastid. It is found in the chloroplast stroma. It catalyses the reaction (2R,3S)-3-isopropylmalate = (2S)-2-isopropylmalate. It functions in the pathway amino-acid biosynthesis; L-leucine biosynthesis; L-leucine from 3-methyl-2-oxobutanoate: step 2/4. Functionally, catalyzes the isomerization between 2-isopropylmalate and 3-isopropylmalate, via the formation of 2-isopropylmaleate. Plays an essential role in leucine biosynthesis. Functions in both the biosynthesis of leucine, and in the methionine chain elongation pathway of aliphatic glucosinolate formation. Plays an essential role in female gametophyte development. This is 3-isopropylmalate dehydratase small subunit 1 from Arabidopsis thaliana (Mouse-ear cress).